The primary structure comprises 187 residues: GTP cyclohydrolase 1 (187 aa).

Cys-76, His-79, and Cys-148 together coordinate Zn(2+).

This sequence belongs to the GTP cyclohydrolase I family. In terms of assembly, toroid-shaped homodecamer, composed of two pentamers of five dimers.

It carries out the reaction GTP + H2O = 7,8-dihydroneopterin 3'-triphosphate + formate + H(+). It functions in the pathway cofactor biosynthesis; 7,8-dihydroneopterin triphosphate biosynthesis; 7,8-dihydroneopterin triphosphate from GTP: step 1/1. The chain is GTP cyclohydrolase 1 from Streptococcus suis (strain 98HAH33).